We begin with the raw amino-acid sequence, 908 residues long: Protein translocase subunit SecA (908 aa).

ATP contacts are provided by residues Q87, 105–109, and D513; that span reads GEGKT. Residues 852 to 863 show a composition bias toward low complexity; sequence ARRAQAQHATAE. The disordered stretch occupies residues 852–908; the sequence is ARRAQAQHATAENQLADDEAEAASPQTVVRDERKVGRNEPCPCGSGKKYKQCHGKID. Zn(2+)-binding residues include C892, C894, C903, and H904. The span at 898-908 shows a compositional bias: basic residues; the sequence is KKYKQCHGKID.

Belongs to the SecA family. Monomer and homodimer. Part of the essential Sec protein translocation apparatus which comprises SecA, SecYEG and auxiliary proteins SecDF-YajC and YidC. The cofactor is Zn(2+).

The protein localises to the cell inner membrane. It is found in the cytoplasm. It carries out the reaction ATP + H2O + cellular proteinSide 1 = ADP + phosphate + cellular proteinSide 2.. Its function is as follows. Part of the Sec protein translocase complex. Interacts with the SecYEG preprotein conducting channel. Has a central role in coupling the hydrolysis of ATP to the transfer of proteins into and across the cell membrane, serving both as a receptor for the preprotein-SecB complex and as an ATP-driven molecular motor driving the stepwise translocation of polypeptide chains across the membrane. The chain is Protein translocase subunit SecA from Vibrio atlanticus (strain LGP32) (Vibrio splendidus (strain Mel32)).